The primary structure comprises 208 residues: 3-isopropylmalate dehydratase small subunit (208 aa).

This sequence belongs to the LeuD family. LeuD type 1 subfamily. In terms of assembly, heterodimer of LeuC and LeuD.

The enzyme catalyses (2R,3S)-3-isopropylmalate = (2S)-2-isopropylmalate. Its pathway is amino-acid biosynthesis; L-leucine biosynthesis; L-leucine from 3-methyl-2-oxobutanoate: step 2/4. Its function is as follows. Catalyzes the isomerization between 2-isopropylmalate and 3-isopropylmalate, via the formation of 2-isopropylmaleate. In Cupriavidus necator (Alcaligenes eutrophus), this protein is 3-isopropylmalate dehydratase small subunit (leuD).